The following is a 601-amino-acid chain: Chaperone protein DnaK (601 aa).

Residue threonine 175 is modified to Phosphothreonine; by autocatalysis. Residues 570–601 (FAQKAASKETSKNEQNEDGSIDAEIKEEDPKA) form a disordered region. The span at 575 to 584 (ASKETSKNEQ) shows a compositional bias: basic and acidic residues. Residues 585–601 (NEDGSIDAEIKEEDPKA) are compositionally biased toward acidic residues.

It belongs to the heat shock protein 70 family.

Its function is as follows. Acts as a chaperone. This chain is Chaperone protein DnaK, found in Mycoplasma mobile (strain ATCC 43663 / 163K / NCTC 11711) (Mesomycoplasma mobile).